The following is a 784-amino-acid chain: LPS-assembly protein LptD (784 aa).

Residues 1–24 (MKKRIPTLLATMIATALYSQQGLA) form the signal peptide. 2 disulfide bridges follow: C31-C724 and C173-C725.

The protein belongs to the LptD family. In terms of assembly, component of the lipopolysaccharide transport and assembly complex. Interacts with LptE and LptA. Post-translationally, contains two intramolecular disulfide bonds.

Its subcellular location is the cell outer membrane. In terms of biological role, together with LptE, is involved in the assembly of lipopolysaccharide (LPS) at the surface of the outer membrane. In Shigella flexneri serotype 5b (strain 8401), this protein is LPS-assembly protein LptD.